Here is a 229-residue protein sequence, read N- to C-terminus: Enolase-phosphatase E1 (229 aa).

Belongs to the HAD-like hydrolase superfamily. MasA/MtnC family. In terms of assembly, monomer. Mg(2+) is required as a cofactor.

The catalysed reaction is 5-methylsulfanyl-2,3-dioxopentyl phosphate + H2O = 1,2-dihydroxy-5-(methylsulfanyl)pent-1-en-3-one + phosphate. It participates in amino-acid biosynthesis; L-methionine biosynthesis via salvage pathway; L-methionine from S-methyl-5-thio-alpha-D-ribose 1-phosphate: step 3/6. Its pathway is amino-acid biosynthesis; L-methionine biosynthesis via salvage pathway; L-methionine from S-methyl-5-thio-alpha-D-ribose 1-phosphate: step 4/6. In terms of biological role, bifunctional enzyme that catalyzes the enolization of 2,3-diketo-5-methylthiopentyl-1-phosphate (DK-MTP-1-P) into the intermediate 2-hydroxy-3-keto-5-methylthiopentenyl-1-phosphate (HK-MTPenyl-1-P), which is then dephosphorylated to form the acireductone 1,2-dihydroxy-3-keto-5-methylthiopentene (DHK-MTPene). This chain is Enolase-phosphatase E1, found in Citrobacter koseri (strain ATCC BAA-895 / CDC 4225-83 / SGSC4696).